Here is a 302-residue protein sequence, read N- to C-terminus: Phospho-N-acetylmuramoyl-pentapeptide-transferase (302 aa).

Helical transmembrane passes span 1 to 21 (MIAA…KLFR), 42 to 62 (GTPT…GMIS), 68 to 88 (VLLG…LSVV), 123 to 143 (FFGF…LVIV), 154 to 174 (GLDG…WFFL), 178 to 198 (GVSE…LVFN), 204 to 224 (IFMG…VSVL), 229 to 249 (FYLV…ILQV), and 279 to 299 (IVAV…EIFG).

Belongs to the glycosyltransferase 4 family. MraY subfamily. Requires Mg(2+) as cofactor.

The protein localises to the cell inner membrane. It carries out the reaction UDP-N-acetyl-alpha-D-muramoyl-L-alanyl-gamma-D-glutamyl-meso-2,6-diaminopimeloyl-D-alanyl-D-alanine + di-trans,octa-cis-undecaprenyl phosphate = di-trans,octa-cis-undecaprenyl diphospho-N-acetyl-alpha-D-muramoyl-L-alanyl-D-glutamyl-meso-2,6-diaminopimeloyl-D-alanyl-D-alanine + UMP. It participates in cell wall biogenesis; peptidoglycan biosynthesis. Catalyzes the initial step of the lipid cycle reactions in the biosynthesis of the cell wall peptidoglycan: transfers peptidoglycan precursor phospho-MurNAc-pentapeptide from UDP-MurNAc-pentapeptide onto the lipid carrier undecaprenyl phosphate, yielding undecaprenyl-pyrophosphoryl-MurNAc-pentapeptide, known as lipid I. In Thermotoga petrophila (strain ATCC BAA-488 / DSM 13995 / JCM 10881 / RKU-1), this protein is Phospho-N-acetylmuramoyl-pentapeptide-transferase.